We begin with the raw amino-acid sequence, 902 residues long: Alanine--tRNA ligase (902 aa).

4 residues coordinate Zn(2+): histidine 567, histidine 571, cysteine 671, and histidine 675.

It belongs to the class-II aminoacyl-tRNA synthetase family. It depends on Zn(2+) as a cofactor.

Its subcellular location is the cytoplasm. It catalyses the reaction tRNA(Ala) + L-alanine + ATP = L-alanyl-tRNA(Ala) + AMP + diphosphate. Functionally, catalyzes the attachment of alanine to tRNA(Ala) in a two-step reaction: alanine is first activated by ATP to form Ala-AMP and then transferred to the acceptor end of tRNA(Ala). Also edits incorrectly charged Ser-tRNA(Ala) and Gly-tRNA(Ala) via its editing domain. The polypeptide is Alanine--tRNA ligase (Mycoplasmoides gallisepticum (strain R(low / passage 15 / clone 2)) (Mycoplasma gallisepticum)).